The primary structure comprises 152 residues: Transcriptional regulator MraZ (152 aa).

2 consecutive SpoVT-AbrB domains span residues 5–52 (ANAV…PLPE) and 81–124 (AVDL…NEDA).

It belongs to the MraZ family. Forms oligomers.

It localises to the cytoplasm. The protein localises to the nucleoid. In Azotobacter vinelandii (strain DJ / ATCC BAA-1303), this protein is Transcriptional regulator MraZ.